Consider the following 379-residue polypeptide: Chaperone protein DnaJ (379 aa).

Residues 5–70 form the J domain; the sequence is DYYEILGVPK…QKRAAYDQYG (66 aa). The segment at 134–212 adopts a CR-type zinc-finger fold; it reads GVTKEIRIPT…CHGHGRIEKT (79 aa). Positions 147, 150, 164, 167, 186, 189, 200, and 203 each coordinate Zn(2+). CXXCXGXG motif repeat units lie at residues 147–154, 164–171, 186–193, and 200–207; these read CEVCHGSG, CPTCHGAG, CPHCQGRG, and CNSCHGHG.

It belongs to the DnaJ family. As to quaternary structure, homodimer. It depends on Zn(2+) as a cofactor.

It is found in the cytoplasm. Participates actively in the response to hyperosmotic and heat shock by preventing the aggregation of stress-denatured proteins and by disaggregating proteins, also in an autonomous, DnaK-independent fashion. Unfolded proteins bind initially to DnaJ; upon interaction with the DnaJ-bound protein, DnaK hydrolyzes its bound ATP, resulting in the formation of a stable complex. GrpE releases ADP from DnaK; ATP binding to DnaK triggers the release of the substrate protein, thus completing the reaction cycle. Several rounds of ATP-dependent interactions between DnaJ, DnaK and GrpE are required for fully efficient folding. Also involved, together with DnaK and GrpE, in the DNA replication of plasmids through activation of initiation proteins. The sequence is that of Chaperone protein DnaJ from Cronobacter sakazakii (strain ATCC BAA-894) (Enterobacter sakazakii).